The chain runs to 414 residues: 5-aminolevulinate synthase (414 aa).

The substrate site is built by arginine 22, serine 133, and lysine 152. Residues serine 185, histidine 213, and threonine 241 each contribute to the pyridoxal 5'-phosphate site. Lysine 244 is a catalytic residue. The residue at position 244 (lysine 244) is an N6-(pyridoxal phosphate)lysine. 2 residues coordinate pyridoxal 5'-phosphate: threonine 273 and threonine 274. Residue threonine 359 coordinates substrate.

It belongs to the class-II pyridoxal-phosphate-dependent aminotransferase family. In terms of assembly, homodimer. The cofactor is pyridoxal 5'-phosphate.

The catalysed reaction is succinyl-CoA + glycine + H(+) = 5-aminolevulinate + CO2 + CoA. It functions in the pathway porphyrin-containing compound metabolism; protoporphyrin-IX biosynthesis; 5-aminolevulinate from glycine: step 1/1. The chain is 5-aminolevulinate synthase (hemA) from Rickettsia felis (strain ATCC VR-1525 / URRWXCal2) (Rickettsia azadi).